A 235-amino-acid chain; its full sequence is Ribonuclease PH (235 aa).

Residues Arg86 and Gly124–Arg126 contribute to the phosphate site.

Belongs to the RNase PH family. As to quaternary structure, homohexameric ring arranged as a trimer of dimers.

It catalyses the reaction tRNA(n+1) + phosphate = tRNA(n) + a ribonucleoside 5'-diphosphate. Its function is as follows. Phosphorolytic 3'-5' exoribonuclease that plays an important role in tRNA 3'-end maturation. Removes nucleotide residues following the 3'-CCA terminus of tRNAs; can also add nucleotides to the ends of RNA molecules by using nucleoside diphosphates as substrates, but this may not be physiologically important. Probably plays a role in initiation of 16S rRNA degradation (leading to ribosome degradation) during starvation. The polypeptide is Ribonuclease PH (Francisella tularensis subsp. novicida (strain U112)).